The primary structure comprises 387 residues: Methyltransferase phomM (387 aa).

Residues 98–223 (PHRPKDLHIL…QSVADLFTTL (126 aa)) are methyltransferase domain.

Belongs to the class I-like SAM-binding methyltransferase superfamily. Erg6/SMT family.

Its pathway is mycotoxin biosynthesis. In terms of biological role, methyltransferase; part of the gene cluster that mediates the biosynthesis of the phomopsins, a group of hexapeptide mycotoxins which infects lupins and causes lupinosis disease in livestock. Within the pathway, phomM acts as an S-adenosylmethionine-dependent alpha-N-methyltransferase that catalyzes two successive N-methylation reactions, converting N-desmethyl-phomopsin A to phomopsin A and phomopsin A further to an N,N-dimethylated congener called phomopsin E. The pathway starts with the processing of the precursor phomA by several endopeptidases including kexin proteases as well as the cluster-specific S41 family peptidase phomP1 and the oligopeptidase phomG to produce 10 identical copies of the hexapeptide Tyr-Val-Ile-Pro-Ile-Asp. After being excised from the precursor peptide, the core peptides are cyclized and modified post-translationally by enzymes encoded within the gene cluster. The timing and order of proteolysis of the phomA precursor and PTMs are still unknown. Two tyrosinase-like enzymes, phomQ1 and phomQ2, catalyze the chlorination and hydroxylation of Tyr, respectively. PhomYb, is proposed to be involved in the construction of the macrocyclic structure. The other 4 ustYa family proteins may be involved in PTMs that generate the unique structure of phomopsin A. PhomYa is required for the hydroxylation of C-beta of Tyr. PhomYc, phomYd, and phomYe are responsible for the biosynthesis of 2,3-dehydroisoleucine (dIle), 2,3-dehydroaspartic acid (dAsp), and 3,4-dehydroproline (dPro), respectively. While dIle formation by phomYc is indispensable for the installation of dAsp by phomYd, the order of the other PTMs have not been elucidated yet. Most of the biosynthetic enzymes likely have broad substrate specificity, and thus, there might be a metabolic grid from a precursor to phomopsin A. The enzyme(s) responsible for the biosynthesis of 3,4-dehydrovaline (dVal) have also not been identified yet. Finally, phomM acts as an S-adenosylmethionine-dependent alpha-N-methyltransferase that catalyzes two successive N-methylation reactions, converting N-desmethyl-phomopsin A to phomopsin A and phomopsin A further to an N,N-dimethylated congener called phomopsin E. This Diaporthe leptostromiformis (Lupinosis disease fungus) protein is Methyltransferase phomM.